Here is a 136-residue protein sequence, read N- to C-terminus: Putative pre-16S rRNA nuclease (136 aa).

The protein belongs to the YqgF nuclease family.

It is found in the cytoplasm. Could be a nuclease involved in processing of the 5'-end of pre-16S rRNA. This Francisella tularensis subsp. tularensis (strain WY96-3418) protein is Putative pre-16S rRNA nuclease.